The primary structure comprises 81 residues: uncharacterized protein (81 aa).

A disordered region spans residues 55 to 81 (LDKRNSNNKIEKSENTGENHDNNQDQK).

This is an uncharacterized protein from Thermoproteus tenax virus 1 (strain KRA1) (TTV1).